Reading from the N-terminus, the 573-residue chain is ESX-1 secretion system protein EccA1 (573 aa).

ATP is bound at residue 334 to 341; the sequence is GPPGTGKT.

The protein belongs to the CbxX/CfxQ family. As to quaternary structure, part of the ESX-1 / type VII secretion system (T7SS), which is composed of cytosolic and membrane components.

It is found in the cytoplasm. Functionally, part of the ESX-1 / type VII specialized secretion system (T7SS), which exports several proteins including EsxA and EsxB. EccA1 exhibits ATPase activity and may provide energy for the export of ESX-1 substrates. The polypeptide is ESX-1 secretion system protein EccA1 (Mycobacterium leprae (strain TN)).